The chain runs to 103 residues: Cytotoxin-like protein TA-BMBGT3 (103 aa).

A signal peptide spans 1 to 21 (MKTLLLTLVVVTIICLDLGYT). 5 cysteine pairs are disulfide-bonded: cysteine 24-cysteine 45, cysteine 27-cysteine 37, cysteine 38-cysteine 72, cysteine 76-cysteine 90, and cysteine 91-cysteine 96.

The protein belongs to the three-finger toxin family. Ancestral subfamily. Orphan group XVII sub-subfamily. As to expression, expressed by the venom gland.

The protein resides in the secreted. The polypeptide is Cytotoxin-like protein TA-BMBGT3 (Bungarus multicinctus (Many-banded krait)).